A 224-amino-acid chain; its full sequence is Peroxiredoxin-6 (224 aa).

Positions 5-169 (LLLGDEAPNF…ILRVVDSLQL (165 aa)) constitute a Thioredoxin domain. Residues 31–40 (DSWGILFSHP) are required and sufficient for targeting to lysosomes and lamellar bodies. A Phosphothreonine modification is found at Thr-44. Cys-47 serves as the catalytic Cysteine sulfenic acid (-SOH) intermediate; for peroxidase activity. Lys-63 is modified (N6-acetyllysine). Phosphotyrosine is present on Tyr-89. The residue at position 93 (Thr-93) is a Phosphothreonine. Catalysis depends on Asp-140, which acts as the For phospholipase activity. Position 177 is a phosphothreonine; by MAPK (Thr-177). Lys-209 carries the N6-acetyllysine; alternate modification. Residue Lys-209 is modified to N6-succinyllysine; alternate.

Belongs to the peroxiredoxin family. Prx6 subfamily. Homodimer. Interacts with GSTP1; mediates PRDX6 glutathionylation and regeneration. Interacts with APEX1. Interacts with STH. May interact with FAM168B. May interact with HTR2A. Post-translationally, irreversibly inactivated by overoxidation of Cys-47 to sulfinic acid (Cys-SO(2)H) and sulfonic acid (Cys-SO(3)H) forms upon oxidative stress. Phosphorylation at Thr-177 by MAP kinases increases the phospholipase activity of the enzyme. The phosphorylated form exhibits a greater lysophosphatidylcholine acyltransferase activity compared to the non-phosphorylated form. In terms of tissue distribution, highly expressed in heart, kidney and liver. Moderate expression in brain and stomach. Very low levels in intestine.

Its subcellular location is the cytoplasm. The protein resides in the lysosome. It catalyses the reaction a hydroperoxide + 2 glutathione = an alcohol + glutathione disulfide + H2O. It carries out the reaction a 1,2-diacyl-sn-glycero-3-phosphocholine + H2O = a 1-acyl-sn-glycero-3-phosphocholine + a fatty acid + H(+). The catalysed reaction is a 1-acyl-sn-glycero-3-phosphocholine + an acyl-CoA = a 1,2-diacyl-sn-glycero-3-phosphocholine + CoA. The enzyme catalyses 1-hexadecanoyl-sn-glycero-3-phosphocholine + hexadecanoyl-CoA = 1,2-dihexadecanoyl-sn-glycero-3-phosphocholine + CoA. It catalyses the reaction 1,2-dihexadecanoyl-sn-glycero-3-phosphocholine + H2O = 1-hexadecanoyl-sn-glycero-3-phosphocholine + hexadecanoate + H(+). MJ33 or lithium;[(2R)-1-hexadecoxy-3-(2,2,2-trifluoroethoxy)propan-2-yl] methyl phosphate inhibits its phospholipase A2 activity. CI-976 or 2,2-Dimethyl-N-(2,4,6-trimethoxyphenyl)dodecanamide inhibits its lysophosphatidylcholine acyltransferase activity. Functionally, thiol-specific peroxidase that catalyzes the reduction of hydrogen peroxide and organic hydroperoxides to water and alcohols, respectively. Can reduce H(2)O(2) and short chain organic, fatty acid, and phospholipid hydroperoxides. Has phospholipase activity. Can either reduce the oxidized sn-2 fatty acyl group of phospholipids (peroxidase activity) or hydrolyze the sn-2 ester bond of phospholipids (phospholipase activity). These activities are dependent on binding to phospholipids at acidic pH and to oxidized phospholipds at cytosolic pH. Plays a role in cell protection against oxidative stress by detoxifying peroxides and in phospholipid homeostasis. Exhibits acyl-CoA-dependent lysophospholipid acyltransferase which mediates the conversion of lysophosphatidylcholine (1-acyl-sn-glycero-3-phosphocholine or LPC) into phosphatidylcholine (1,2-diacyl-sn-glycero-3-phosphocholine or PC). Shows a clear preference for LPC as the lysophospholipid and for palmitoyl CoA as the fatty acyl substrate. The polypeptide is Peroxiredoxin-6 (Prdx6) (Mus musculus (Mouse)).